Consider the following 144-residue polypeptide: Eukaryotic translation initiation factor 1A, Y-chromosomal (144 aa).

The span at 1–15 shows a compositional bias: basic residues; it reads MPKNKGKGGKNRRRG. The segment at 1–26 is disordered; the sequence is MPKNKGKGGKNRRRGKNENESEKREL. Residues 16-26 show a composition bias toward basic and acidic residues; the sequence is KNENESEKREL. Residues 22–96 form the S1-like domain; the sequence is EKRELVFKED…NKADVILKYN (75 aa). Residue lysine 88 forms a Glycyl lysine isopeptide (Lys-Gly) (interchain with G-Cter in ubiquitin) linkage. The segment at 114-144 is disordered; sequence KINETDTFGPGDDDEIQFDDIGDDDEDIDDI. Residues 124–144 are compositionally biased toward acidic residues; it reads GDDDEIQFDDIGDDDEDIDDI.

This sequence belongs to the eIF-1A family. Component of the 43S pre-initiation complex (43S PIC), which is composed of the 40S ribosomal subunit, EIF1, eIF1A (EIF1AX), eIF3 complex, EIF5 and eIF2-GTP-initiator tRNA complex (eIF2 ternary complex). Interacts with EIF5; this interaction contributes to the maintenance of EIF1 within the open 43S PIC. Interacts through its C-terminal domain (CTD) with the CTD of EIF5B; from the location of the start codon by the 43S complex until the formation of the 80S complex. In terms of tissue distribution, ubiquitous.

The protein localises to the cytoplasm. Its function is as follows. Component of the 43S pre-initiation complex (43S PIC), which binds to the mRNA cap-proximal region, scans mRNA 5'-untranslated region, and locates the initiation codon. This protein enhances formation of the cap-proximal complex. Together with EIF1, facilitates scanning, start codon recognition, promotion of the assembly of 48S complex at the initiation codon (43S PIC becomes 48S PIC after the start codon is reached), and dissociation of aberrant complexes. After start codon location, together with EIF5B orients the initiator methionine-tRNA in a conformation that allows 60S ribosomal subunit joining to form the 80S initiation complex. Is released after 80S initiation complex formation, just after GTP hydrolysis by EIF5B, and before release of EIF5B. Its globular part is located in the A site of the 40S ribosomal subunit. Its interaction with EIF5 during scanning contribute to the maintenance of EIF1 within the open 43S PIC. In contrast to yeast orthologs, does not bind EIF1. This chain is Eukaryotic translation initiation factor 1A, Y-chromosomal (EIF1AY), found in Homo sapiens (Human).